The chain runs to 418 residues: Nucleoside permease NupC (418 aa).

9 consecutive transmembrane segments (helical) span residues isoleucine 2–phenylalanine 22, isoleucine 34–glycine 54, isoleucine 93–isoleucine 113, isoleucine 174–alanine 194, isoleucine 198–alanine 218, leucine 264–phenylalanine 284, leucine 292–alanine 314, alanine 354–glycine 374, and valine 395–leucine 415.

The protein belongs to the concentrative nucleoside transporter (CNT) (TC 2.A.41) family.

The protein resides in the cell inner membrane. In terms of biological role, involved in purine nucleosides uptake. Could also be involved in uptake of nucleobases. In Helicobacter pylori (strain ATCC 700392 / 26695) (Campylobacter pylori), this protein is Nucleoside permease NupC.